Here is a 207-residue protein sequence, read N- to C-terminus: Protein GET1 (207 aa).

Over 1 to 4 the chain is Lumenal; sequence MPSL. Residues 5–24 traverse the membrane as a helical segment; sequence LISVLFLHIAIYIINTIGAS. Topologically, residues 25 to 110 are cytoplasmic; sequence TIDSLLWLIY…LFDVAVKALR (86 aa). Positions 44 to 97 form a coiled coil; the sequence is MAREQHQMKLEVVQLKREMNATSSQDEFAKWAKLRRRHDKALEEYEVKNKQFSR. The helical transmembrane segment at 111–131 threads the bilayer; sequence WAGTSGLILLLQFWFSKTPIF. Residues 132–155 lie on the Lumenal side of the membrane; the sequence is TLPPSWIPWQVEWVLSFPRAPMGT. Residues 156–172 traverse the membrane as a helical segment; sequence VSIQVWGGACAVMVALV. Over 173–207 the chain is Cytoplasmic; it reads GEAIGATVRYLYGSKDSMEAIKVGAGAVEKEKKRQ.

The protein belongs to the WRB/GET1 family. Interacts with GET3.

The protein localises to the endoplasmic reticulum membrane. Required for the post-translational delivery of tail-anchored (TA) proteins to the endoplasmic reticulum. Acts as a membrane receptor for soluble GET3, which recognizes and selectively binds the transmembrane domain of TA proteins in the cytosol. The polypeptide is Protein GET1 (Paracoccidioides lutzii (strain ATCC MYA-826 / Pb01) (Paracoccidioides brasiliensis)).